The sequence spans 498 residues: ATP synthase subunit beta, chloroplastic (498 aa).

172–179 (GGAGVGKT) provides a ligand contact to ATP.

The protein belongs to the ATPase alpha/beta chains family. F-type ATPases have 2 components, CF(1) - the catalytic core - and CF(0) - the membrane proton channel. CF(1) has five subunits: alpha(3), beta(3), gamma(1), delta(1), epsilon(1). CF(0) has four main subunits: a(1), b(1), b'(1) and c(9-12).

It localises to the plastid. It is found in the chloroplast thylakoid membrane. The enzyme catalyses ATP + H2O + 4 H(+)(in) = ADP + phosphate + 5 H(+)(out). Produces ATP from ADP in the presence of a proton gradient across the membrane. The catalytic sites are hosted primarily by the beta subunits. The protein is ATP synthase subunit beta, chloroplastic of Solanum tuberosum (Potato).